The following is a 994-amino-acid chain: Regulator of telomere elongation helicase 1 homolog (994 aa).

One can recognise a Helicase ATP-binding domain in the interval Ala7–Leu316. Ser42–Thr49 is an ATP binding site. Residues Cys146, Cys164, Cys173, and Cys209 each contribute to the [4Fe-4S] cluster site. The DEAH box motif lies at Asp252 to His255. The segment at Ser861–Lys887 is disordered. Low complexity predominate over residues Ser874 to Gln884.

It belongs to the helicase family. RAD3/XPD subfamily.

It is found in the nucleus. It catalyses the reaction ATP + H2O = ADP + phosphate + H(+). In terms of biological role, a probable ATP-dependent DNA helicase implicated in DNA repair and the maintenance of genomic stability. Acts as an anti-recombinase to counteract toxic recombination and limit crossover during meiosis. Regulates meiotic recombination and crossover homeostasis by physically dissociating strand invasion events and thereby promotes noncrossover repair by meiotic synthesis dependent strand annealing (SDSA) as well as disassembly of D loop recombination intermediates. This is Regulator of telomere elongation helicase 1 homolog from Drosophila ananassae (Fruit fly).